A 271-amino-acid polypeptide reads, in one-letter code: Thiazole synthase (271 aa).

Lys104 acts as the Schiff-base intermediate with DXP in catalysis. 1-deoxy-D-xylulose 5-phosphate contacts are provided by residues Gly165, 192-193 (AG), and 214-215 (NT).

Belongs to the ThiG family. In terms of assembly, homotetramer. Forms heterodimers with either ThiH or ThiS.

Its subcellular location is the cytoplasm. The enzyme catalyses [ThiS sulfur-carrier protein]-C-terminal-Gly-aminoethanethioate + 2-iminoacetate + 1-deoxy-D-xylulose 5-phosphate = [ThiS sulfur-carrier protein]-C-terminal Gly-Gly + 2-[(2R,5Z)-2-carboxy-4-methylthiazol-5(2H)-ylidene]ethyl phosphate + 2 H2O + H(+). It participates in cofactor biosynthesis; thiamine diphosphate biosynthesis. Its function is as follows. Catalyzes the rearrangement of 1-deoxy-D-xylulose 5-phosphate (DXP) to produce the thiazole phosphate moiety of thiamine. Sulfur is provided by the thiocarboxylate moiety of the carrier protein ThiS. In vitro, sulfur can be provided by H(2)S. The protein is Thiazole synthase of Burkholderia lata (strain ATCC 17760 / DSM 23089 / LMG 22485 / NCIMB 9086 / R18194 / 383).